A 1044-amino-acid chain; its full sequence is Outer dynein arm-docking complex subunit 2 (1044 aa).

2 stretches are compositionally biased toward basic and acidic residues: residues 317–338 (IKFS…EVAI) and 379–401 (SKDR…EKSR). Disordered regions lie at residues 317–409 (IKFS…PGRA) and 423–446 (ISDS…ANAD). 5 HEAT repeats span residues 448–485 (PSEY…AQET), 487–527 (QLAI…NPQI), 530–568 (NIVD…FRRA), 627–665 (AIRK…EENY), and 668–706 (AIKA…DEET). 11 ARM repeats span residues 484-523 (ETCQ…EISH), 525-564 (PQIR…NVAK), 535-577 (GGLP…RHGG), 622-661 (YANK…ECAS), 663-702 (ENYR…QCAE), 746-785 (KENV…ECCQ), 828-867 (PESM…PCIQ), 871-910 (DAGE…NIAK), 912-951 (QENL…RCCM), 953-992 (GRNR…QLSE), and 1004-1031 (GAVK…ISNI). 5 HEAT repeats span residues 831–870 (MMII…QNAK), 874–914 (EMVR…DQEN), 916–955 (AVIT…WGRN), 958–996 (AFGE…DADN), and 999–1037 (TMHE…LALA).

In terms of assembly, component of the outer dynein arm-docking complex along with ODAD1, ODAD3, ODAD4 and CLXN. Interacts with CFAP61. In terms of tissue distribution, expressed in trachea multiciliated cells.

The protein localises to the cytoplasm. It is found in the cytoskeleton. It localises to the cilium axoneme. The protein resides in the cilium basal body. Its function is as follows. Component of the outer dynein arm-docking complex (ODA-DC) that mediates outer dynein arms (ODA) binding onto the doublet microtubule. Involved in mediating assembly of both ODAs and their axonemal docking complex onto ciliary microtubules. This is Outer dynein arm-docking complex subunit 2 (ODAD2) from Bos taurus (Bovine).